Consider the following 1277-residue polypeptide: Y' element ATP-dependent helicase YEL077C (1277 aa).

Residues 222–399 enclose the Helicase ATP-binding domain; the sequence is EIYMADTPSV…LQRIGLTGLA (178 aa). 235-242 serves as a coordination point for ATP; the sequence is APPGYGKT. A DEAH box motif is present at residues 345–348; sequence DEFH. The region spanning 454-605 is the Helicase C-terminal domain; that stretch reads ALKLLLALFE…EFYGLESKKG (152 aa). 2 disordered regions span residues 696–763 and 775–895; these read NVRT…NATT and TTKS…NRFH. A compositionally biased stretch (low complexity) spans 775 to 878; it reads TTKSINSSTN…ATTTESTNAS (104 aa). Residues 879–895 are compositionally biased toward basic and acidic residues; that stretch reads AKEDANKDGNAEDNRFH.

Belongs to the helicase family. Yeast subtelomeric Y' repeat subfamily.

Catalyzes DNA unwinding and is involved in telomerase-independent telomere maintenance. The protein is Y' element ATP-dependent helicase YEL077C of Saccharomyces cerevisiae (strain ATCC 204508 / S288c) (Baker's yeast).